The primary structure comprises 204 residues: Photosynthetic NDH subunit of subcomplex B 3, chloroplastic (204 aa).

Disordered stretches follow at residues 1 to 24 (MGSV…FSHK) and 45 to 68 (KTVR…DEPP). A chloroplast-targeting transit peptide spans 1–48 (MGSVQLSGSGLVASLPPNHSFSHKTKLNKPNSYFFRSKHNAARTKTVR). One can recognise a 2Fe-2S ferredoxin-type domain in the interval 76-180 (HSVLLPDGTP…STGLVVIQQL (105 aa)). 4 residues coordinate [2Fe-2S] cluster: C120, C126, C129, and C162.

Part of the chloroplast NDH complex, composed of a mixture of chloroplast and nucleus encoded subunits. Component of the NDH subcomplex B, at least composed of PnsB1, PnsB2, PnsB3, PnsB4 and PnsB5.

It is found in the plastid. Its subcellular location is the chloroplast thylakoid membrane. In terms of biological role, NDH shuttles electrons from NAD(P)H:plastoquinone, via FMN and iron-sulfur (Fe-S) centers, to quinones in the photosynthetic chain and possibly in a chloroplast respiratory chain. The immediate electron acceptor for the enzyme in this species is believed to be plastoquinone. Couples the redox reaction to proton translocation, and thus conserves the redox energy in a proton gradient. This Arabidopsis thaliana (Mouse-ear cress) protein is Photosynthetic NDH subunit of subcomplex B 3, chloroplastic.